Consider the following 157-residue polypeptide: uncharacterized protein (157 aa).

Positions 36–63 form a coiled coil; it reads QIEELNELCQFFNISLTYTRESLEELEN.

This is an uncharacterized protein from Bacillus subtilis (strain 168).